Here is a 185-residue protein sequence, read N- to C-terminus: Protein GrpE (185 aa).

Over residues 1-11 (MENTQENPTDQ) the composition is skewed to polar residues. Residues 1-38 (MENTQENPTDQTTEETGREAQAAEPAAQAAENAAPAAE) form a disordered region. Residues 19–38 (EAQAAEPAAQAAENAAPAAE) are compositionally biased toward low complexity.

The protein belongs to the GrpE family. In terms of assembly, homodimer.

It is found in the cytoplasm. In terms of biological role, participates actively in the response to hyperosmotic and heat shock by preventing the aggregation of stress-denatured proteins, in association with DnaK and GrpE. It is the nucleotide exchange factor for DnaK and may function as a thermosensor. Unfolded proteins bind initially to DnaJ; upon interaction with the DnaJ-bound protein, DnaK hydrolyzes its bound ATP, resulting in the formation of a stable complex. GrpE releases ADP from DnaK; ATP binding to DnaK triggers the release of the substrate protein, thus completing the reaction cycle. Several rounds of ATP-dependent interactions between DnaJ, DnaK and GrpE are required for fully efficient folding. The polypeptide is Protein GrpE (Burkholderia mallei (strain NCTC 10247)).